The chain runs to 96 residues: uncharacterized protein (96 aa).

The HTH cro/C1-type domain maps to 38 to 91 (IEQLRKGTGLKIDDFARVLGVSVAMVKEWESRRVKPSSAELKLMRLIQANPALS). The H-T-H motif DNA-binding region spans 49–68 (IDDFARVLGVSVAMVKEWES).

This is an uncharacterized protein from Escherichia coli O157:H7.